The chain runs to 89 residues: Large ribosomal subunit protein eL34 (89 aa).

The protein belongs to the eukaryotic ribosomal protein eL34 family.

This chain is Large ribosomal subunit protein eL34, found in Methanococcus vannielii (strain ATCC 35089 / DSM 1224 / JCM 13029 / OCM 148 / SB).